Reading from the N-terminus, the 119-residue chain is NADH-quinone oxidoreductase subunit A (119 aa).

The next 3 membrane-spanning stretches (helical) occupy residues Tyr7–Gly27, Leu63–Val83, and Ile88–Ala108.

This sequence belongs to the complex I subunit 3 family. In terms of assembly, NDH-1 is composed of 14 different subunits. Subunits NuoA, H, J, K, L, M, N constitute the membrane sector of the complex.

It is found in the cell inner membrane. The enzyme catalyses a quinone + NADH + 5 H(+)(in) = a quinol + NAD(+) + 4 H(+)(out). Its function is as follows. NDH-1 shuttles electrons from NADH, via FMN and iron-sulfur (Fe-S) centers, to quinones in the respiratory chain. The immediate electron acceptor for the enzyme in this species is believed to be ubiquinone. Couples the redox reaction to proton translocation (for every two electrons transferred, four hydrogen ions are translocated across the cytoplasmic membrane), and thus conserves the redox energy in a proton gradient. The protein is NADH-quinone oxidoreductase subunit A of Burkholderia mallei (strain NCTC 10247).